Consider the following 237-residue polypeptide: Protein GrpE (237 aa).

Disordered stretches follow at residues 27-51 (EDREAEASTSSGEASAEASQDLSET) and 202-237 (AVSSGSPTSEPSPSDPATPKPEPESTPASPQNPQHS). Low complexity-rich tracts occupy residues 33–45 (ASTSSGEASAEAS) and 204–213 (SSGSPTSEPS). The segment covering 227 to 237 (TPASPQNPQHS) has biased composition (polar residues).

Belongs to the GrpE family. In terms of assembly, homodimer.

It localises to the cytoplasm. In terms of biological role, participates actively in the response to hyperosmotic and heat shock by preventing the aggregation of stress-denatured proteins, in association with DnaK and GrpE. It is the nucleotide exchange factor for DnaK and may function as a thermosensor. Unfolded proteins bind initially to DnaJ; upon interaction with the DnaJ-bound protein, DnaK hydrolyzes its bound ATP, resulting in the formation of a stable complex. GrpE releases ADP from DnaK; ATP binding to DnaK triggers the release of the substrate protein, thus completing the reaction cycle. Several rounds of ATP-dependent interactions between DnaJ, DnaK and GrpE are required for fully efficient folding. The sequence is that of Protein GrpE from Synechococcus sp. (strain JA-3-3Ab) (Cyanobacteria bacterium Yellowstone A-Prime).